Consider the following 266-residue polypeptide: Segregation and condensation protein A (266 aa).

This sequence belongs to the ScpA family. As to quaternary structure, component of a cohesin-like complex composed of ScpA, ScpB and the Smc homodimer, in which ScpA and ScpB bind to the head domain of Smc. The presence of the three proteins is required for the association of the complex with DNA.

The protein resides in the cytoplasm. Participates in chromosomal partition during cell division. May act via the formation of a condensin-like complex containing Smc and ScpB that pull DNA away from mid-cell into both cell halves. In Coxiella burnetii (strain RSA 493 / Nine Mile phase I), this protein is Segregation and condensation protein A.